The chain runs to 435 residues: Bifunctional protein GlmU (435 aa).

The interval 1–224 (MNDTSIIILA…EQNFMGINDK (224 aa)) is pyrophosphorylase. UDP-N-acetyl-alpha-D-glucosamine-binding positions include 9–12 (LAAG), Lys23, Gln75, and 82–83 (GT). Asp103 provides a ligand contact to Mg(2+). Gly136, Glu150, Asn165, and Asn222 together coordinate UDP-N-acetyl-alpha-D-glucosamine. Position 222 (Asn222) interacts with Mg(2+). A linker region spans residues 225–245 (FQLSVAEKIMQDEIKQDLMKA). The interval 246–435 (GVLMRLPESI…KFFGKNNAEK (190 aa)) is N-acetyltransferase. Residues Arg309 and Lys326 each contribute to the UDP-N-acetyl-alpha-D-glucosamine site. Residue His337 is the Proton acceptor of the active site. Tyr340 and Asn351 together coordinate UDP-N-acetyl-alpha-D-glucosamine. Acetyl-CoA-binding positions include 360-361 (NY), Ser379, Ala397, and Arg414.

This sequence in the N-terminal section; belongs to the N-acetylglucosamine-1-phosphate uridyltransferase family. The protein in the C-terminal section; belongs to the transferase hexapeptide repeat family. Homotrimer. Mg(2+) is required as a cofactor.

The protein localises to the cytoplasm. The enzyme catalyses alpha-D-glucosamine 1-phosphate + acetyl-CoA = N-acetyl-alpha-D-glucosamine 1-phosphate + CoA + H(+). The catalysed reaction is N-acetyl-alpha-D-glucosamine 1-phosphate + UTP + H(+) = UDP-N-acetyl-alpha-D-glucosamine + diphosphate. The protein operates within nucleotide-sugar biosynthesis; UDP-N-acetyl-alpha-D-glucosamine biosynthesis; N-acetyl-alpha-D-glucosamine 1-phosphate from alpha-D-glucosamine 6-phosphate (route II): step 2/2. It functions in the pathway nucleotide-sugar biosynthesis; UDP-N-acetyl-alpha-D-glucosamine biosynthesis; UDP-N-acetyl-alpha-D-glucosamine from N-acetyl-alpha-D-glucosamine 1-phosphate: step 1/1. It participates in bacterial outer membrane biogenesis; LPS lipid A biosynthesis. Its function is as follows. Catalyzes the last two sequential reactions in the de novo biosynthetic pathway for UDP-N-acetylglucosamine (UDP-GlcNAc). The C-terminal domain catalyzes the transfer of acetyl group from acetyl coenzyme A to glucosamine-1-phosphate (GlcN-1-P) to produce N-acetylglucosamine-1-phosphate (GlcNAc-1-P), which is converted into UDP-GlcNAc by the transfer of uridine 5-monophosphate (from uridine 5-triphosphate), a reaction catalyzed by the N-terminal domain. The chain is Bifunctional protein GlmU from Campylobacter curvus (strain 525.92).